A 184-amino-acid polypeptide reads, in one-letter code: Photosystem I assembly protein Ycf4 (184 aa).

Transmembrane regions (helical) follow at residues 21-43 (NYFW…VSSY) and 63-85 (GIVM…FTIF).

The protein belongs to the Ycf4 family.

The protein resides in the plastid. Its subcellular location is the chloroplast thylakoid membrane. Seems to be required for the assembly of the photosystem I complex. The protein is Photosystem I assembly protein Ycf4 of Chaetosphaeridium globosum (Charophycean green alga).